The chain runs to 153 residues: SKP1-like protein 5 (153 aa).

Residues 90–153 (MMAANYLNIQ…IREENQWAFQ (64 aa)) form an interaction with the F-box domain of F-box proteins region.

The protein belongs to the SKP1 family. Part of a SCF (SKP1-cullin-F-box) protein ligase complex. Interacts with PP2A13. As to expression, restricted to inflorescences, especially in the inflorescence meristem (IM).

It is found in the nucleus. It functions in the pathway protein modification; protein ubiquitination. In terms of biological role, involved in ubiquitination and subsequent proteasomal degradation of target proteins. Together with CUL1, RBX1 and a F-box protein, it forms a SCF E3 ubiquitin ligase complex. The functional specificity of this complex depends on the type of F-box protein. In the SCF complex, it serves as an adapter that links the F-box protein to CUL1. This is SKP1-like protein 5 (ASK5) from Arabidopsis thaliana (Mouse-ear cress).